Consider the following 186-residue polypeptide: Peptidyl-tRNA hydrolase (186 aa).

Residue Tyr14 participates in tRNA binding. His19 (proton acceptor) is an active-site residue. Residues Tyr64, Asn66, and Asn112 each contribute to the tRNA site.

Belongs to the PTH family. Monomer.

The protein localises to the cytoplasm. The enzyme catalyses an N-acyl-L-alpha-aminoacyl-tRNA + H2O = an N-acyl-L-amino acid + a tRNA + H(+). Functionally, hydrolyzes ribosome-free peptidyl-tRNAs (with 1 or more amino acids incorporated), which drop off the ribosome during protein synthesis, or as a result of ribosome stalling. In terms of biological role, catalyzes the release of premature peptidyl moieties from peptidyl-tRNA molecules trapped in stalled 50S ribosomal subunits, and thus maintains levels of free tRNAs and 50S ribosomes. The chain is Peptidyl-tRNA hydrolase from Bacillus anthracis.